The chain runs to 317 residues: MKNGGGNRVAVVGTGFVGSSYAFALMNQGIADEIVLIDANENKAKGDAMDLNHGKVFAPNPTNIWYGDYHDCRDADLVVICAGANQKPGETRLDLVDKNIAIFRSIVESVMASGFQGLFLVATNPVDILTYATWKFSGLPYERVIGSGTILDTARFRFLLGEYFDIAPTNVHAYIIGEHGDTELPVWSQADIGGVPIRKLIESKGEQAREELERIFVNVRDAAYQIIEKKGATYYGIAMGLARVTRAILHNENAILTVSAYLDGLYGERDVYIGVPAVINRHGIREVIELELDDNEQKWFQHSAATLKGVLARSFAQ.

NAD(+) contacts are provided by residues Val17, Asp38, Lys43, Tyr69, and 83–84 (GA). Substrate is bound by residues Gln86 and Arg92. NAD(+) contacts are provided by residues Ser105, 122–124 (ATN), and Ser147. Residue 124–127 (NPVD) participates in substrate binding. Residue 152–155 (DTAR) participates in substrate binding. Residues Arg157 and His172 each coordinate beta-D-fructose 1,6-bisphosphate. His179 functions as the Proton acceptor in the catalytic mechanism. Tyr224 carries the post-translational modification Phosphotyrosine. Residue Thr233 coordinates substrate.

This sequence belongs to the LDH/MDH superfamily. LDH family. As to quaternary structure, homotetramer.

It localises to the cytoplasm. It catalyses the reaction (S)-lactate + NAD(+) = pyruvate + NADH + H(+). It participates in fermentation; pyruvate fermentation to lactate; (S)-lactate from pyruvate: step 1/1. Allosterically activated by fructose 1,6-bisphosphate (FBP). Functionally, catalyzes the conversion of lactate to pyruvate. This is L-lactate dehydrogenase from Geobacillus thermodenitrificans (strain NG80-2).